A 508-amino-acid chain; its full sequence is MSDMDHTCFDTAKIDKLQELRERGVTVYPYTFDRRDTVEEIKERFSAIEHDKSEEEVSTAGRVYVVRQHGKTIFADIGDSEGRIQLYLRKNDLGEEQFDLFKQYVDAGDIVGVVGHVFRTKMGEITVWVDRFELLTKSVCPLPEKFHGLKNVETRYRQRYLDLIMNEESRETFRARSRIISLLRQFLFERDYLEFETPTLQPIYGGANARPFTTHHNALDQKLYLRIAPELYLKRLVVGGFDKVFEIAKNFRNEDIDTNHNPEFTMVEVYEAYRDYNDMMNLTEEILSHLAEKVLGTTVCSFAGHDLDFSRPWRRLTMEEAVREYAGIDFPAMSLEELHAFGLEHCVEGCESAATRGEYLVLFFEHFGEKHLIQPTFIYDFPIENSPLAKKHRSKEGLTERFELFIAGMEMANGFSELNDPLDQKARLEQQDAKRRKGDLEAQMIDYDFINALGYGMPPTGGVGIGIDRLVMLLTGKDSIKEVLLFPQMKTAVPGQNGDKAEEGDGEE.

The Mg(2+) site is built by E403 and E410.

Belongs to the class-II aminoacyl-tRNA synthetase family. In terms of assembly, homodimer. Requires Mg(2+) as cofactor.

It is found in the cytoplasm. The enzyme catalyses tRNA(Lys) + L-lysine + ATP = L-lysyl-tRNA(Lys) + AMP + diphosphate. The sequence is that of Lysine--tRNA ligase from Methanoculleus marisnigri (strain ATCC 35101 / DSM 1498 / JR1).